A 173-amino-acid chain; its full sequence is Membrane protein PM19L (173 aa).

A run of 4 helical transmembrane segments spans residues 9 to 29 (IAPL…FASW), 43 to 63 (GVAG…AGVV), 83 to 103 (LAAG…AFGL), and 124 to 144 (FVII…GGLF).

As to expression, expressed in roots, leaf blades, leaf sheaths, stems, spikelets and embryos.

Its subcellular location is the membrane. May be involved in abiotic stress response through abscisic acid-dependent signaling. In Oryza sativa subsp. japonica (Rice), this protein is Membrane protein PM19L.